The following is a 185-amino-acid chain: dTTP/UTP pyrophosphatase (185 aa).

Aspartate 64 functions as the Proton acceptor in the catalytic mechanism.

The protein belongs to the Maf family. YhdE subfamily. A divalent metal cation is required as a cofactor.

The protein localises to the cytoplasm. The catalysed reaction is dTTP + H2O = dTMP + diphosphate + H(+). The enzyme catalyses UTP + H2O = UMP + diphosphate + H(+). Its function is as follows. Nucleoside triphosphate pyrophosphatase that hydrolyzes dTTP and UTP. May have a dual role in cell division arrest and in preventing the incorporation of modified nucleotides into cellular nucleic acids. This is dTTP/UTP pyrophosphatase from Leptospira borgpetersenii serovar Hardjo-bovis (strain JB197).